The following is a 616-amino-acid chain: 2-isopropylmalate synthase (616 aa).

The segment at 1–34 is disordered; it reads MSPNDAFISAPAKIETPVGPRNEGQPAWNKQRGS. A Pyruvate carboxyltransferase domain is found at 67-341; it reads PQWCAVDLRD…DPQLDFTDIR (275 aa). Mg(2+)-binding residues include D76, H280, H282, and N316. The segment at 490–616 is regulatory domain; the sequence is RTAPVEQIAL…NHEAVLAGGV (127 aa).

This sequence belongs to the alpha-IPM synthase/homocitrate synthase family. LeuA type 2 subfamily. Homodimer. The cofactor is Mg(2+).

It is found in the cytoplasm. The enzyme catalyses 3-methyl-2-oxobutanoate + acetyl-CoA + H2O = (2S)-2-isopropylmalate + CoA + H(+). Its pathway is amino-acid biosynthesis; L-leucine biosynthesis; L-leucine from 3-methyl-2-oxobutanoate: step 1/4. Catalyzes the condensation of the acetyl group of acetyl-CoA with 3-methyl-2-oxobutanoate (2-ketoisovalerate) to form 3-carboxy-3-hydroxy-4-methylpentanoate (2-isopropylmalate). The chain is 2-isopropylmalate synthase from Corynebacterium glutamicum (strain R).